The chain runs to 504 residues: Splicing factor SF3a60 homolog (504 aa).

S2 is modified (N-acetylserine). Disordered regions lie at residues 293-319 and 355-374; these read DKKHFARPPHNGKQNGDAKSTHESENA and YEEMEGEREGEEANTELESD. Positions 356–374 are enriched in acidic residues; the sequence is EEMEGEREGEEANTELESD. The residue at position 373 (S373) is a Phosphoserine. The segment at 409-440 adopts a Matrin-type zinc-finger fold; the sequence is FKCEICGNYSYWGRRAFERHFKEWRHQHGMRC.

This sequence belongs to the SF3A3 family. As to expression, expressed at moderate levels in all sporophytic tissues with strongest expression in gametophytes.

Its subcellular location is the nucleus. Functionally, splicing factor homolog to SF3a60 that may be involved in pre-spliceosome formation. Is necessary for gametic cell fate determination. The protein is Splicing factor SF3a60 homolog of Arabidopsis thaliana (Mouse-ear cress).